The chain runs to 221 residues: Probable hydrogenase maturation factor HypB (221 aa).

Residues 35–196 (AFDFMGAIGS…KRINPDAEVV (162 aa)) form a G-domain region. Positions 95 and 96 each coordinate Ni(2+). Residues Cys-95, His-96, His-100, His-104, and Cys-127 each coordinate Zn(2+). Cys-127 contributes to the Ni(2+) binding site.

This sequence belongs to the SIMIBI class G3E GTPase family. HypB/HupM subfamily. As to quaternary structure, homodimer.

Its function is as follows. Involved in the maturation of [NiFe] hydrogenases. Required for nickel insertion into the metal center of the hydrogenase. Exhibits a low intrinsic GTPase activity, which is essential for nickel insertion. The sequence is that of Probable hydrogenase maturation factor HypB from Methanocaldococcus jannaschii (strain ATCC 43067 / DSM 2661 / JAL-1 / JCM 10045 / NBRC 100440) (Methanococcus jannaschii).